The following is a 671-amino-acid chain: DNA ligase (671 aa).

Residues 32–36 (DAEYD), 81–82 (SL), and glutamate 113 contribute to the NAD(+) site. Lysine 115 acts as the N6-AMP-lysine intermediate in catalysis. The NAD(+) site is built by arginine 136, glutamate 173, lysine 290, and lysine 314. Residues cysteine 408, cysteine 411, cysteine 426, and cysteine 432 each coordinate Zn(2+). Positions 593–671 (EIDSPFAGKT…EAEMIRLLGA (79 aa)) constitute a BRCT domain.

Belongs to the NAD-dependent DNA ligase family. LigA subfamily. Mg(2+) serves as cofactor. The cofactor is Mn(2+).

It carries out the reaction NAD(+) + (deoxyribonucleotide)n-3'-hydroxyl + 5'-phospho-(deoxyribonucleotide)m = (deoxyribonucleotide)n+m + AMP + beta-nicotinamide D-nucleotide.. Functionally, DNA ligase that catalyzes the formation of phosphodiester linkages between 5'-phosphoryl and 3'-hydroxyl groups in double-stranded DNA using NAD as a coenzyme and as the energy source for the reaction. It is essential for DNA replication and repair of damaged DNA. The polypeptide is DNA ligase (Salmonella choleraesuis (strain SC-B67)).